Reading from the N-terminus, the 217-residue chain is Large ribosomal subunit protein uL3 (217 aa).

It belongs to the universal ribosomal protein uL3 family. Part of the 50S ribosomal subunit. Forms a cluster with proteins L14 and L19.

One of the primary rRNA binding proteins, it binds directly near the 3'-end of the 23S rRNA, where it nucleates assembly of the 50S subunit. This Mycolicibacterium smegmatis (strain ATCC 700084 / mc(2)155) (Mycobacterium smegmatis) protein is Large ribosomal subunit protein uL3.